We begin with the raw amino-acid sequence, 262 residues long: Flap endonuclease Xni (262 aa).

A Mg(2+)-binding site is contributed by aspartate 109. Positions 165–255 (LKPEQLADYW…FNLQDIRYEK (91 aa)) constitute a 5'-3' exonuclease domain. 4 residues coordinate K(+): leucine 176, alanine 177, isoleucine 187, and valine 190. Residues 189-194 (GVGPKA) form an interaction with DNA region.

This sequence belongs to the Xni family. The cofactor is Mg(2+). K(+) serves as cofactor.

Its function is as follows. Has flap endonuclease activity. During DNA replication, flap endonucleases cleave the 5'-overhanging flap structure that is generated by displacement synthesis when DNA polymerase encounters the 5'-end of a downstream Okazaki fragment. This chain is Flap endonuclease Xni, found in Aliivibrio fischeri (strain MJ11) (Vibrio fischeri).